The chain runs to 469 residues: MTAEQCQRCNKNAVEVISRKELFCAECFRVFVMQKQRKQMMSDDYYRDIFKVMYKDKIRSAEEAEQQNKNSTILIPLSFGSSSLMMLDIVHLTLLEQKMQHQKTGFNVDVLICYRESNDELLTNIQSNIKELSTVRYSENKDNIRFHTLCLDSMFEIDKELIDQVVLHNVEFTGRQVSINESEHANLSLQTVLTSCPNRSTKEDIIDFVTKHLVKKYAYQNGQKAILWGHSMTRLADEIISCVVKGRGAQISSKLNTTNLDVNYGSRFKNLYPLKDILLTEVDAYCALFDLSKYLIKYELQDSLLVNKLKKEKHIGNQRLAKNMTINELARKYFNDIEGEYSNVIATVLRTGDKLDEPLATLGEKHCRICKSTVHDDVSKWLRDITVNVGQPLESQLERDLHEKWATSHIGLETTAYYQLRDRVWEQGDDVDLCYGCIVTMQGVKNLNVPWPKNNEQELNEVLAEYSLE.

Belongs to the CTU2/NCS2 family.

The protein localises to the cytoplasm. The protein operates within tRNA modification; 5-methoxycarbonylmethyl-2-thiouridine-tRNA biosynthesis. Its function is as follows. Plays a central role in 2-thiolation of mcm(5)S(2)U at tRNA wobble positions of tRNA(Lys), tRNA(Glu) and tRNA(Gln). May act by forming a heterodimer with NCS6 that ligates sulfur from thiocarboxylated URM1 onto the uridine of tRNAs at wobble position. Prior mcm(5) tRNA modification by the elongator complex is required for 2-thiolation. May also be involved in protein urmylation. This chain is Cytoplasmic tRNA 2-thiolation protein 2, found in Candida glabrata (strain ATCC 2001 / BCRC 20586 / JCM 3761 / NBRC 0622 / NRRL Y-65 / CBS 138) (Yeast).